A 284-amino-acid polypeptide reads, in one-letter code: Asialoglycoprotein receptor 1 (284 aa).

The span at 1-18 (MTKDYQDFQHLDNDNDHH) shows a compositional bias: basic and acidic residues. The interval 1–25 (MTKDYQDFQHLDNDNDHHQLRRGPP) is disordered. Residues 1 to 39 (MTKDYQDFQHLDNDNDHHQLRRGPPPTPRLLQRLCSGSR) are Cytoplasmic-facing. The Endocytosis signal motif lies at 5-8 (YQDF). C35 carries S-palmitoyl cysteine lipidation. The chain crosses the membrane as a helical; Signal-anchor for type II membrane protein span at residues 40–60 (LLLLSSSLSILLLVVVCVITS). Residues 59-117 (TSQNSQLREDLLALRQNFSNLTVSTEDQVKALSTQGSSVGRKMKLVESKLEKQQKDLTE) adopt a coiled-coil conformation. Residues 61–284 (QNSQLREDLL…VCETKLDKAN (224 aa)) are Extracellular-facing. N-linked (GlcNAc...) asparagine glycosylation is found at N75, N78, and N146. 3 disulfides stabilise this stretch: C153–C164, C181–C276, and C254–C268. The C-type lectin domain occupies 160 to 277 (YEGSCYWFSS…CRRPYRWVCE (118 aa)). The Ca(2+) site is built by V190, E196, D215, Q239, D241, E252, D253, N264, D265, and E277.

In terms of assembly, interacts with LASS2. Phosphorylated on a cytoplasmic Ser residue. In terms of tissue distribution, expressed exclusively in hepatic parenchymal cells.

It localises to the membrane. Mediates the endocytosis of plasma glycoproteins to which the terminal sialic acid residue on their complex carbohydrate moieties has been removed. The receptor recognizes terminal galactose and N-acetylgalactosamine units. After ligand binding to the receptor, the resulting complex is internalized and transported to a sorting organelle, where receptor and ligand are disassociated. The receptor then returns to the cell membrane surface. The sequence is that of Asialoglycoprotein receptor 1 (Asgr1) from Mus musculus (Mouse).